We begin with the raw amino-acid sequence, 81 residues long: Anaphase-promoting complex subunit emb-1 (81 aa).

As to quaternary structure, the APC/C is probably composed of at least 12 subunits: apc-2, apc-10, apc-11, cdc-26, emb-1, emb-27, emb-30, mat-1, mat-2, mat-3, such-1 and gfi-3. In terms of tissue distribution, expressed in germ cells.

It functions in the pathway protein modification; protein ubiquitination. Its function is as follows. Probable component of the anaphase promoting complex/cyclosome (APC/C), a cell cycle-regulated E3 ubiquitin ligase that controls progression through mitosis and the G1 phase of the cell cycle. The APC/C complex acts by mediating ubiquitination and subsequent degradation of target proteins. Developmental role in early embryogenesis and the metaphase to anaphase transition in meiosis and mitosis. May be required for germline proliferation. Required for male tail development and hermaphrodite vulva formation. This is Anaphase-promoting complex subunit emb-1 from Caenorhabditis elegans.